Consider the following 367-residue polypeptide: Uroporphyrinogen decarboxylase (367 aa).

Substrate-binding positions include Arg28–Arg32, Asp78, Tyr158, Thr213, and His334.

The protein belongs to the uroporphyrinogen decarboxylase family. In terms of assembly, homodimer.

It localises to the cytoplasm. It carries out the reaction uroporphyrinogen III + 4 H(+) = coproporphyrinogen III + 4 CO2. Its pathway is porphyrin-containing compound metabolism; protoporphyrin-IX biosynthesis; coproporphyrinogen-III from 5-aminolevulinate: step 4/4. Its function is as follows. Catalyzes the decarboxylation of four acetate groups of uroporphyrinogen-III to yield coproporphyrinogen-III. In Ralstonia pickettii (strain 12J), this protein is Uroporphyrinogen decarboxylase.